We begin with the raw amino-acid sequence, 173 residues long: Translation initiation factor IF-3 (173 aa).

The protein belongs to the IF-3 family. In terms of assembly, monomer.

It is found in the cytoplasm. IF-3 binds to the 30S ribosomal subunit and shifts the equilibrium between 70S ribosomes and their 50S and 30S subunits in favor of the free subunits, thus enhancing the availability of 30S subunits on which protein synthesis initiation begins. This chain is Translation initiation factor IF-3, found in Methylorubrum populi (strain ATCC BAA-705 / NCIMB 13946 / BJ001) (Methylobacterium populi).